Here is a 607-residue protein sequence, read N- to C-terminus: MSSYLDDLRIDLAASPASGGSASIAVGSFNIPYEVTRRLKGVGADADTTLTSCASWTQLQKLYEQYGDEPIKKHFEADSERGQRYSVKVSLGSKDENFLFLDYSKSHINDEIKCALLRLAEERGIRQFVQSVFRGERVNTTENRPVLHIALRNRSNRPIYVDGKDVMPAVNKVLDQMRSFSEKVRTGEWKGHTGKAIRHVVNIGIGGSDLGPVMATEALKPFSQRDLSLHFVSNVDGTHIAEVLKSIDIEATLFIVASKTFTTQETITNALSARRALLDYLRSRGIDEKGSVAKHFVALSTNNQKVKEFGIDEENMFQFWDWVGGRYSMWSAIGLPIMISIGYENFVELLTGAHVIDEHFANAPPEQNVPLLLALVGVWYINFFGAVTHAILPYDQYLWRLPAYLQQLDMESNGKYVTRSGKTVSTLTGPIIFGEAGTNGQHAFYQLIHQGTNLIPCDFIGAIQSQNKIGDHHKIFMSNFFAQTEALMIGKSPSEVRRELEAAGERSAEKINALLPHKTFIGGRPSNTLLIKSLTPRALGAIIAMYEHKVLVQGAIWGIDSYDQWGVELGKVLAKSILPQLRPGMRVNNHDSSTNGLINMFNELSHL.

Glu-411 (proton donor) is an active-site residue. Residues His-442 and Lys-571 contribute to the active site. Positions 605 to 607 (SHL) match the Microbody targeting signal motif.

It belongs to the GPI family. Homodimer.

Its subcellular location is the glycosome. It catalyses the reaction alpha-D-glucose 6-phosphate = beta-D-fructose 6-phosphate. The protein operates within carbohydrate degradation; glycolysis; D-glyceraldehyde 3-phosphate and glycerone phosphate from D-glucose: step 2/4. In Trypanosoma brucei brucei, this protein is Glucose-6-phosphate isomerase, glycosomal (PGI).